The following is a 186-amino-acid chain: Peptidyl-tRNA hydrolase (186 aa).

A tRNA-binding site is contributed by tyrosine 14. The Proton acceptor role is filled by histidine 19. TRNA is bound by residues tyrosine 60 and asparagine 62.

The protein belongs to the PTH family. In terms of assembly, monomer.

The protein resides in the cytoplasm. It carries out the reaction an N-acyl-L-alpha-aminoacyl-tRNA + H2O = an N-acyl-L-amino acid + a tRNA + H(+). Functionally, hydrolyzes ribosome-free peptidyl-tRNAs (with 1 or more amino acids incorporated), which drop off the ribosome during protein synthesis, or as a result of ribosome stalling. Catalyzes the release of premature peptidyl moieties from peptidyl-tRNA molecules trapped in stalled 50S ribosomal subunits, and thus maintains levels of free tRNAs and 50S ribosomes. The sequence is that of Peptidyl-tRNA hydrolase from Mycoplasmopsis pulmonis (strain UAB CTIP) (Mycoplasma pulmonis).